Consider the following 188-residue polypeptide: Adenine phosphoribosyltransferase (188 aa).

Belongs to the purine/pyrimidine phosphoribosyltransferase family. As to quaternary structure, homodimer.

The protein localises to the cytoplasm. The catalysed reaction is AMP + diphosphate = 5-phospho-alpha-D-ribose 1-diphosphate + adenine. It participates in purine metabolism; AMP biosynthesis via salvage pathway; AMP from adenine: step 1/1. Catalyzes a salvage reaction resulting in the formation of AMP, that is energically less costly than de novo synthesis. This Paraburkholderia phymatum (strain DSM 17167 / CIP 108236 / LMG 21445 / STM815) (Burkholderia phymatum) protein is Adenine phosphoribosyltransferase.